Consider the following 255-residue polypeptide: 5'-nucleotidase SurE (255 aa).

A divalent metal cation contacts are provided by aspartate 8, aspartate 9, serine 40, and asparagine 93.

The protein belongs to the SurE nucleotidase family. A divalent metal cation is required as a cofactor.

It localises to the cytoplasm. It carries out the reaction a ribonucleoside 5'-phosphate + H2O = a ribonucleoside + phosphate. In terms of biological role, nucleotidase that shows phosphatase activity on nucleoside 5'-monophosphates. The sequence is that of 5'-nucleotidase SurE from Rhodopseudomonas palustris (strain ATCC BAA-98 / CGA009).